A 799-amino-acid chain; its full sequence is High affinity nerve growth factor receptor (799 aa).

The first 33 residues, 1–33, serve as a signal peptide directing secretion; the sequence is MLRGQRLGQLGWHRPAAGLGSLMTSLMLACASA. Residues 34-420 are Extracellular-facing; that stretch reads ASCREVCCPV…VEKKDETPFG (387 aa). Intrachain disulfides connect cysteine 36–cysteine 41 and cysteine 40–cysteine 50. The N-linked (GlcNAc...) asparagine glycan is linked to asparagine 67. LRR repeat units follow at residues 90–113 and 116–137; these read LGEL…AFRF and RLSH…TVQG. 10 N-linked (GlcNAc...) asparagine glycosylation sites follow: asparagine 121, asparagine 190, asparagine 204, asparagine 255, asparagine 264, asparagine 320, asparagine 325, asparagine 341, asparagine 361, and asparagine 404. The 72-residue stretch at 148-219 folds into the LRRCT domain; the sequence is NPLHCSCALF…GDDVFLQCQV (72 aa). The cysteines at positions 154 and 193 are disulfide-linked. 2 consecutive Ig-like C2-type domains span residues 196 to 285 and 205 to 368; these read PTVK…VSVS and DSVE…LAAN. Intrachain disulfides connect cysteine 217-cysteine 267 and cysteine 302-cysteine 348. A helical transmembrane segment spans residues 421–441; sequence VSVAVGLAVSAALFLSALLLV. Residues 442–799 are Cytoplasmic-facing; the sequence is LNKCGQRSKF…APPSYLDVLG (358 aa). Residues 472-493 are interaction with SQSTM1; that stretch reads MTLGGSSLSPTEGKGSGLQGHI. Tyrosine 499 is subject to Phosphotyrosine; by autocatalysis. The Protein kinase domain maps to 513-784; that stretch reads IILKWELGEG…LSMKDVHARL (272 aa). ATP contacts are provided by residues 519 to 527 and lysine 547; that span reads LGEGAFGKV. Aspartate 653 (proton acceptor) is an active-site residue. Phosphotyrosine; by autocatalysis is present on residues tyrosine 679, tyrosine 683, tyrosine 684, and tyrosine 794.

The protein belongs to the protein kinase superfamily. Tyr protein kinase family. Insulin receptor subfamily. As to quaternary structure, exists in a dynamic equilibrium between monomeric (low affinity) and dimeric (high affinity) structures. Homodimerization is induced by binding of a NGF dimer. Found in a complex, at least composed of KIDINS220, MAGI2, NTRK1 and RAPGEF2; the complex is mainly formed at late endosomes in a nerve growth factor (NGF)-dependent manner. Interacts with RAPGEF2; the interaction is strengthened after NGF stimulation. Interacts with SQSTM1; bridges NTRK1 to NGFR. Forms a ternary complex with NGFR and KIDINS220; this complex is affected by the expression levels of KIDINS220 and an increase in KIDINS220 expression leads to a decreased association of NGFR and NTRK1. Interacts (phosphorylated upon activation by NGF) with SHC1; mediates SHC1 phosphorylation and activation. Interacts (phosphorylated upon activation by NGF) with PLCG1; mediates PLCG1 phosphorylation and activation. Interacts (phosphorylated) with SH2B1 and SH2B2. Interacts with GRB2. Interacts with PIK3R1. Interacts with FRS2. Interacts with SORT1; may regulate NTRK1 anterograde axonal transport. Interacts with SH2D1A; regulates NTRK1. Interacts with NRADD. Interacts with RAB7A. Interacts with PTPRS. Interacts with USP36; USP36 does not deubiquitinate NTRK1. Interacts with GGA3. Interacts with TSPAN1; this interaction promotes NTRK1 stability. Ligand-mediated autophosphorylation. Interaction with SQSTM1 is phosphotyrosine-dependent. Autophosphorylation at Tyr-499 mediates interaction and phosphorylation of SHC1. Post-translationally, N-glycosylated. In terms of processing, ubiquitinated. Undergoes polyubiquitination upon activation; regulated by NGFR. Ubiquitination by NEDD4L leads to degradation. Ubiquitination regulates the internalization of the receptor.

Its subcellular location is the cell membrane. The protein localises to the early endosome membrane. It localises to the late endosome membrane. It is found in the recycling endosome membrane. The catalysed reaction is L-tyrosyl-[protein] + ATP = O-phospho-L-tyrosyl-[protein] + ADP + H(+). With respect to regulation, the pro-survival signaling effect of NTRK1 in neurons requires its endocytosis into signaling early endosomes and its retrograde axonal transport. This is regulated by different proteins including CFL1, RAC1 and SORT1. NTF3 is unable to induce this signaling probably due to the lability of the NTF3-NTRK1 complex in endosomes. SH2D1A inhibits the autophosphorylation of the receptor, and alters the recruitment and activation of downstream effectors and signaling cascades. Regulated by NGFR. Receptor tyrosine kinase involved in the development and the maturation of the central and peripheral nervous systems through regulation of proliferation, differentiation and survival of sympathetic and nervous neurons. High affinity receptor for NGF which is its primary ligand, it can also bind and be activated by NTF3/neurotrophin-3. However, NTF3 only supports axonal extension through NTRK1 but has no effect on neuron survival. Upon dimeric NGF ligand-binding, undergoes homodimerization, autophosphorylation and activation. Recruits, phosphorylates and/or activates several downstream effectors including SHC1, FRS2, SH2B1, SH2B2 and PLCG1 that regulate distinct overlapping signaling cascades driving cell survival and differentiation. Through SHC1 and FRS2 activates a GRB2-Ras-MAPK cascade that regulates cell differentiation and survival. Through PLCG1 controls NF-Kappa-B activation and the transcription of genes involved in cell survival. Through SHC1 and SH2B1 controls a Ras-PI3 kinase-AKT1 signaling cascade that is also regulating survival. In absence of ligand and activation, may promote cell death, making the survival of neurons dependent on trophic factors. The chain is High affinity nerve growth factor receptor (Ntrk1) from Mus musculus (Mouse).